Reading from the N-terminus, the 243-residue chain is Ubiquinone/menaquinone biosynthesis C-methyltransferase UbiE (243 aa).

Residues T69, D90, and 116–117 (DA) contribute to the S-adenosyl-L-methionine site.

It belongs to the class I-like SAM-binding methyltransferase superfamily. MenG/UbiE family.

It carries out the reaction a 2-demethylmenaquinol + S-adenosyl-L-methionine = a menaquinol + S-adenosyl-L-homocysteine + H(+). It catalyses the reaction a 2-methoxy-6-(all-trans-polyprenyl)benzene-1,4-diol + S-adenosyl-L-methionine = a 5-methoxy-2-methyl-3-(all-trans-polyprenyl)benzene-1,4-diol + S-adenosyl-L-homocysteine + H(+). It functions in the pathway quinol/quinone metabolism; menaquinone biosynthesis; menaquinol from 1,4-dihydroxy-2-naphthoate: step 2/2. Its pathway is cofactor biosynthesis; ubiquinone biosynthesis. Methyltransferase required for the conversion of demethylmenaquinol (DMKH2) to menaquinol (MKH2) and the conversion of 2-polyprenyl-6-methoxy-1,4-benzoquinol (DDMQH2) to 2-polyprenyl-3-methyl-6-methoxy-1,4-benzoquinol (DMQH2). This chain is Ubiquinone/menaquinone biosynthesis C-methyltransferase UbiE, found in Burkholderia cenocepacia (strain HI2424).